Consider the following 216-residue polypeptide: GTP cyclohydrolase-2 (216 aa).

51–55 lines the GTP pocket; sequence RIHSE. 3 residues coordinate Zn(2+): Cys56, Cys67, and Cys69. Residues Gln72, 94–96, and Thr116 each bind GTP; that span reads EGR. Catalysis depends on Asp128, which acts as the Proton acceptor. The Nucleophile role is filled by Arg130. GTP-binding residues include Thr151 and Lys156.

This sequence belongs to the GTP cyclohydrolase II family. The cofactor is Zn(2+).

The enzyme catalyses GTP + 4 H2O = 2,5-diamino-6-hydroxy-4-(5-phosphoribosylamino)-pyrimidine + formate + 2 phosphate + 3 H(+). Its pathway is cofactor biosynthesis; riboflavin biosynthesis; 5-amino-6-(D-ribitylamino)uracil from GTP: step 1/4. In terms of biological role, catalyzes the conversion of GTP to 2,5-diamino-6-ribosylamino-4(3H)-pyrimidinone 5'-phosphate (DARP), formate and pyrophosphate. This chain is GTP cyclohydrolase-2, found in Haemophilus influenzae (strain 86-028NP).